The following is a 307-amino-acid chain: Glutaminase 1 (307 aa).

Substrate-binding residues include Ser62, Asn114, Glu159, Asn166, Tyr190, Tyr242, and Val260.

It belongs to the glutaminase family. As to quaternary structure, homotetramer.

It catalyses the reaction L-glutamine + H2O = L-glutamate + NH4(+). The sequence is that of Glutaminase 1 from Clostridium perfringens (strain 13 / Type A).